The chain runs to 131 residues: Antiholin (131 aa).

The Periplasmic portion of the chain corresponds to 1-15; it reads MTMIAWMQHFLETDE. Cytoplasmic segments follow at residues 1–52 and 39–50; these read MTMI…SSFK and FAKLNPNIKFSS. Residues 16–38 traverse the membrane as a helical segment; that stretch reads TKLIYWLTFLMVCMVVDTVLGVL. The chain crosses the membrane as a helical span at residues 53–75; it reads IKTGVLIKVSEMILALLAVPFAV. Topologically, residues 76-78 are periplasmic; that stretch reads PFP. The chain crosses the membrane as a helical span at residues 79–101; it reads AGLPLLYTVYTALCVSEIYSIFG. The Cytoplasmic portion of the chain corresponds to 102-131; the sequence is HLRLVDDKSDFLEILENFFKRTSGKNKEDK.

It belongs to the bacteriophage holin family. phi29likevirus holin subfamily. In terms of assembly, homomultimer. Interacts with isoform Antiholin; this interaction blocks the holin homomultimerization and delays host cell lysis.

The protein resides in the host cell inner membrane. Accumulates harmlessly in the cytoplasmic membrane until it reaches a critical concentration that triggers the formation of micron-scale pores (holes) causing host cell membrane disruption and endolysin escape into the periplasmic space. Determines the precise timing of host cell lysis. Participates with the endolysin and spanin proteins in the sequential events which lead to the programmed host cell lysis releasing the mature viral particles from the host cell. In terms of biological role, counteracts the aggregation of the holin molecules and thus of pore formation. The sequence is that of Antiholin (14) from Bacillus subtilis (Bacteriophage PZA).